We begin with the raw amino-acid sequence, 206 residues long: MGGKWSKSSIVGWPAIRERIRRTNPAADGVGAVSRDLEKHGAITSSNTASTNADCAWLEAQEESDEVGFPVRPQVPLRPMTYKEALDLSHFLKEKGGLEGLIWSKKRQEILDLWVYNTQGIFPDWQNYTPGPGIRYPLTFGWCYELVPVDPQEVEEDTEGETNSLLHPICQHGMEDPERQVLKWRFNSRLAFEHKAREMHPEFYKN.

The N-myristoyl glycine; by host moiety is linked to residue Gly2. Ser6 carries the phosphoserine; by host modification. The acidic; interacts with host PACS1 and PACS2; stabilizes the interaction of NEF/MHC-I with host AP1M1; necessary for MHC-I internalization stretch occupies residues 62-66; that stretch reads EESDE. The segment at 70–79 is SH3-binding; interaction with Src family tyrosine kinases; the sequence is PVRPQVPLRP. The PxxP; stabilizes the interaction of NEF/MHC-I with host AP1M1; necessary for MHC-I internalization signature appears at 73–76; the sequence is PQVP. The mediates dimerization, Nef-PTE1 interaction stretch occupies residues 109-125; the sequence is EILDLWVYNTQGIFPDW. Positions 149-181 are binding to ATP6V1H; that stretch reads VDPQEVEEDTEGETNSLLHPICQHGMEDPERQV. Positions 165 to 166 match the Dileucine internalization motif; necessary for CD4 internalization motif; the sequence is LL. The short motif at 175–176 is the Diacidic; necessary for CD4 internalization element; that stretch reads ED.

The protein belongs to the lentivirus primate group Nef protein family. In terms of assembly, monomer; cytosolic form. Homodimer; membrane bound form. Interacts with Nef associated p21-activated kinase (PAK2); this interaction activates PAK2. Associates with the Nef-MHC-I-AP1 complex; this complex is required for MHC-I internalization. Interacts (via C-terminus) with host PI3-kinase. Interacts with host PACS1; this interaction seems to be weak. Interacts with host PACS2. Interacts with host LCK and MAPK3; these interactions inhibit the kinase activity of the latter. Interacts with host ATP6V1H; this interaction may play a role in CD4 endocytosis. Associates with the CD4-Nef-AP2 complex; this complex is required for CD4 internalization. Interacts with host AP2 subunit alpha and AP2 subunit sigma2. Interacts with TCR-zeta chain; this interaction up-regulates the Fas ligand (FasL) surface expression. Interacts with host HCK, LYN, and SRC; these interactions activate the Src family kinases. Interacts with MAP3K5; this interaction inhibits the Fas and TNFR-mediated death signals. Interacts with beta-COP and PTE1. Interacts with human RACK1; this increases Nef phosphorylation by PKC. Interacts with TP53; this interaction decreases the half-life of TP53, protecting the infected cell against p53-mediated apoptosis. In terms of processing, the virion-associated Nef proteins are cleaved by the viral protease to release the soluble C-terminal core protein. Nef is probably cleaved concomitantly with viral structural proteins on maturation of virus particles. Post-translationally, myristoylated. Phosphorylated on serine residues, probably by host PKCdelta and theta.

The protein resides in the host cell membrane. Its subcellular location is the virion. The protein localises to the secreted. It localises to the host Golgi apparatus membrane. Its function is as follows. Factor of infectivity and pathogenicity, required for optimal virus replication. Alters numerous pathways of T-lymphocyte function and down-regulates immunity surface molecules in order to evade host defense and increase viral infectivity. Alters the functionality of other immunity cells, like dendritic cells, monocytes/macrophages and NK cells. Functionally, in infected CD4(+) T-lymphocytes, down-regulates the surface MHC-I, mature MHC-II, CD4, CD28, CCR5 and CXCR4 molecules. Mediates internalization and degradation of host CD4 through the interaction of with the cytoplasmic tail of CD4, the recruitment of AP-2 (clathrin adapter protein complex 2), internalization through clathrin coated pits, and subsequent transport to endosomes and lysosomes for degradation. Diverts host MHC-I molecules to the trans-Golgi network-associated endosomal compartments by an endocytic pathway to finally target them for degradation. MHC-I down-regulation may involve AP-1 (clathrin adapter protein complex 1) or possibly Src family kinase-ZAP70/Syk-PI3K cascade recruited by PACS2. In consequence infected cells are masked for immune recognition by cytotoxic T-lymphocytes. Decreasing the number of immune receptors also prevents reinfection by more HIV particles (superinfection). Down-regulates host SERINC3 and SERINC5 thereby excluding these proteins from the viral particles. Virion infectivity is drastically higher when SERINC3 or SERINC5 are excluded from the viral envelope, because these host antiviral proteins impair the membrane fusion event necessary for subsequent virion penetration. Bypasses host T-cell signaling by inducing a transcriptional program nearly identical to that of anti-CD3 cell activation. Interaction with TCR-zeta chain up-regulates the Fas ligand (FasL). Increasing surface FasL molecules and decreasing surface MHC-I molecules on infected CD4(+) cells send attacking cytotoxic CD8+ T-lymphocytes into apoptosis. In terms of biological role, plays a role in optimizing the host cell environment for viral replication without causing cell death by apoptosis. Protects the infected cells from apoptosis in order to keep them alive until the next virus generation is ready to strike. Inhibits the Fas and TNFR-mediated death signals by blocking MAP3K5/ASK1. Decreases the half-life of TP53, protecting the infected cell against p53-mediated apoptosis. Inhibits the apoptotic signals regulated by the Bcl-2 family proteins through the formation of a Nef/PI3-kinase/PAK2 complex that leads to activation of PAK2 and induces phosphorylation of host BAD. Its function is as follows. Extracellular Nef protein targets CD4(+) T-lymphocytes for apoptosis by interacting with CXCR4 surface receptors. The sequence is that of Protein Nef from Homo sapiens (Human).